The sequence spans 480 residues: uncharacterized protein (480 aa).

The PUA domain occupies 131–207 (KKIIKIKNDV…KVVKVRFFIK (77 aa)).

In the C-terminal section; belongs to the PAPS reductase family.

This is an uncharacterized protein from Methanocaldococcus jannaschii (strain ATCC 43067 / DSM 2661 / JAL-1 / JCM 10045 / NBRC 100440) (Methanococcus jannaschii).